The primary structure comprises 249 residues: Cysteine desulfuration protein SufE (249 aa).

Catalysis depends on cysteine 154, which acts as the Cysteine persulfide intermediate.

Belongs to the SufE family. In terms of assembly, monomer. Interacts with SufS; interaction enhances cysteine desulfurase activity of SufS. Proteolytically cleaved.

The protein resides in the plastid. Its subcellular location is the apicoplast. Its pathway is cofactor biosynthesis; iron-sulfur cluster biosynthesis. Functionally, participates in sulfur mobilization (SUF) pathway for iron-sulfur (Fe-S) cluster biogenesis. Enhances cysteine desulfurase activity of SufS. Probably functions as a sulfur acceptor for SufS. This chain is Cysteine desulfuration protein SufE, found in Plasmodium falciparum (isolate 3D7).